The primary structure comprises 81 residues: MAHSVKIYDTCIGCTQCVRACPTDVLEMIPWDGCKASQIASAPRTEDCVGCKRCESACPTDFLSVRVYLGPETTRSMGLAY.

2 4Fe-4S ferredoxin-type domains span residues 2–31 and 39–68; these read AHSVKIYDTCIGCTQCVRACPTDVLEMIPW and IASAPRTEDCVGCKRCESACPTDFLSVRVY. The [4Fe-4S] cluster site is built by Cys-11, Cys-14, Cys-17, Cys-21, Cys-48, Cys-51, Cys-54, and Cys-58.

As to quaternary structure, the eukaryotic PSI reaction center is composed of at least 11 subunits. [4Fe-4S] cluster serves as cofactor.

The protein resides in the plastid. The protein localises to the chloroplast thylakoid membrane. The catalysed reaction is reduced [plastocyanin] + hnu + oxidized [2Fe-2S]-[ferredoxin] = oxidized [plastocyanin] + reduced [2Fe-2S]-[ferredoxin]. Its function is as follows. Apoprotein for the two 4Fe-4S centers FA and FB of photosystem I (PSI); essential for photochemical activity. FB is the terminal electron acceptor of PSI, donating electrons to ferredoxin. The C-terminus interacts with PsaA/B/D and helps assemble the protein into the PSI complex. Required for binding of PsaD and PsaE to PSI. PSI is a plastocyanin-ferredoxin oxidoreductase, converting photonic excitation into a charge separation, which transfers an electron from the donor P700 chlorophyll pair to the spectroscopically characterized acceptors A0, A1, FX, FA and FB in turn. This chain is Photosystem I iron-sulfur center, found in Zygnema circumcarinatum (Green alga).